We begin with the raw amino-acid sequence, 495 residues long: Heterogeneous nuclear ribonucleoprotein Q (495 aa).

Residues 1-10 (MSDARDNDDR) are compositionally biased toward basic and acidic residues. The interval 1–101 (MSDARDNDDR…KPPSPIDDED (101 aa)) is disordered. Acidic residues-rich tracts occupy residues 11–46 (VDFE…DDDV) and 67–101 (MEDV…DDED). 3 consecutive RRM domains span residues 116-194 (SEVF…LSET), 196-278 (NRLF…WADP), and 292-368 (KALY…LAKP). The tract at residues 452–495 (MPMAAAPPQRPRRNDRNNGSSGGSGRDNSHEHDGNRGGRRYRPY) is disordered. The span at 478–487 (DNSHEHDGNR) shows a compositional bias: basic and acidic residues.

Interacts with LHP1 in the nucleus on a common set of chromatin regions. In terms of tissue distribution, predominantly expressed in vascular and meristematic tissues. Expressed throughout development in seedlings, roots, leaves, floral buds and siliques.

It is found in the nucleus. The protein localises to the cytoplasm. The protein resides in the microsome. Its function is as follows. Transcriptional activator that binds DNA on GAGA-like motif and 5'-(C/G)ACGTG(G/T)C(A/G)-3' consensus motif in the promoters of target genes. Component of ribonucleosomes, which are complexes of at least 20 other different heterogeneous nuclear ribonucleoproteins (hnRNP). hnRNP play an important role in processing of precursor mRNA in the nucleus. Required during flower development and for cell fate determination. Acts both as an antagonist and as a promoter of polycomb LHP1 gene regulation activity, depending of target genes, to regulate the transcription of stress-responsive and flowering genes. May regulate histone H3 trimethylation on lysine 27 (H3K27me3). Recognizes and binds histone H3 tails methylated at 'Lys-4' (H3K4me) and acetylated at 'Lys-9' (H3K9ac), leading to epigenetic activation. When in complex with LHP1, recognizes and binds histone H3 tails methylated at 'Lys-4' (H3K4me) and 'Lys-27' (H3K27me), mostly corresponding to stress-responsive genes. May function as a suppressor of cell-autonomous immune responses involving glucosinolates, salicylic acid (SA) and jasmonic acid (JA) pathways toward pathogenic bacteria and fungi. In Arabidopsis thaliana (Mouse-ear cress), this protein is Heterogeneous nuclear ribonucleoprotein Q.